A 479-amino-acid chain; its full sequence is Membrane-bound lytic murein transglycosylase F (479 aa).

The first 15 residues, 1–15 (MKRLLLVLCYITLLA), serve as a signal peptide directing secretion. A non-LT domain region spans residues 16 to 258 (GCQKVVVEQE…HLNEKYFAHV (243 aa)). An LT domain region spans residues 260 to 479 (RFDYVDTRAF…QTDAIQPQQP (220 aa)). Residue glutamate 303 is part of the active site. The disordered stretch occupies residues 457–479 (LQTAEAKETEEKPQTDAIQPQQP). Residues 461 to 470 (EAKETEEKPQ) are compositionally biased toward basic and acidic residues.

The protein in the N-terminal section; belongs to the bacterial solute-binding protein 3 family. In the C-terminal section; belongs to the transglycosylase Slt family.

The protein resides in the cell outer membrane. The enzyme catalyses Exolytic cleavage of the (1-&gt;4)-beta-glycosidic linkage between N-acetylmuramic acid (MurNAc) and N-acetylglucosamine (GlcNAc) residues in peptidoglycan, from either the reducing or the non-reducing ends of the peptidoglycan chains, with concomitant formation of a 1,6-anhydrobond in the MurNAc residue.. Murein-degrading enzyme that degrades murein glycan strands and insoluble, high-molecular weight murein sacculi, with the concomitant formation of a 1,6-anhydromuramoyl product. Lytic transglycosylases (LTs) play an integral role in the metabolism of the peptidoglycan (PG) sacculus. Their lytic action creates space within the PG sacculus to allow for its expansion as well as for the insertion of various structures such as secretion systems and flagella. In Shewanella pealeana (strain ATCC 700345 / ANG-SQ1), this protein is Membrane-bound lytic murein transglycosylase F.